Reading from the N-terminus, the 383-residue chain is UDP-N-acetylglucosamine--N-acetylmuramyl-(pentapeptide) pyrophosphoryl-undecaprenol N-acetylglucosamine transferase (383 aa).

Residues 10-12 (TGG), Asn124, Arg165, Ser190, Ile245, and Gln290 contribute to the UDP-N-acetyl-alpha-D-glucosamine site. Positions 364–383 (PFGQAREPGQKPARPPDLAS) are disordered.

It belongs to the glycosyltransferase 28 family. MurG subfamily.

It is found in the cell inner membrane. It catalyses the reaction di-trans,octa-cis-undecaprenyl diphospho-N-acetyl-alpha-D-muramoyl-L-alanyl-D-glutamyl-meso-2,6-diaminopimeloyl-D-alanyl-D-alanine + UDP-N-acetyl-alpha-D-glucosamine = di-trans,octa-cis-undecaprenyl diphospho-[N-acetyl-alpha-D-glucosaminyl-(1-&gt;4)]-N-acetyl-alpha-D-muramoyl-L-alanyl-D-glutamyl-meso-2,6-diaminopimeloyl-D-alanyl-D-alanine + UDP + H(+). The protein operates within cell wall biogenesis; peptidoglycan biosynthesis. Cell wall formation. Catalyzes the transfer of a GlcNAc subunit on undecaprenyl-pyrophosphoryl-MurNAc-pentapeptide (lipid intermediate I) to form undecaprenyl-pyrophosphoryl-MurNAc-(pentapeptide)GlcNAc (lipid intermediate II). This Anaeromyxobacter dehalogenans (strain 2CP-C) protein is UDP-N-acetylglucosamine--N-acetylmuramyl-(pentapeptide) pyrophosphoryl-undecaprenol N-acetylglucosamine transferase.